Here is a 399-residue protein sequence, read N- to C-terminus: Bombesin receptor subtype-3 (399 aa).

Over 1–41 (MSQRQSQSPNQTLISITNDTETSSSVVSNDTTHKGWTGDNS) the chain is Extracellular. N-linked (GlcNAc...) asparagine glycosylation is found at Asn-10, Asn-18, and Asn-29. A helical transmembrane segment spans residues 42 to 63 (PGIEALCAIYITYAGIISVGIL). At 64-82 (GNAILIKVFFKTKSMQTVP) the chain is on the cytoplasmic side. The helical transmembrane segment at 83 to 103 (NIFITSLAFGDLLLLLTCVPV) threads the bilayer. Residues 104–121 (DATHYLAEGWLFGKVGCK) lie on the Extracellular side of the membrane. Cys-120 and Cys-203 are joined by a disulfide. Residues 122–143 (VLSFIRLTSVGVSVFTLTILSA) form a helical membrane-spanning segment. The Cytoplasmic portion of the chain corresponds to 144–163 (DRYKAVVKPLERQPPNAILK). A helical membrane pass occupies residues 164–184 (TCAKAGGIWIVSMIFALPEAI). The Extracellular portion of the chain corresponds to 185-220 (FSNVYTFQDPNRNVTFESCNSYPISERLLQEIHSLL). Residues 221–241 (CFLVFYIIPLSIISVYYSLIA) form a helical membrane-spanning segment. Over 242–272 (RTLYKSTLNIPTEEQSHARKQIESRKRIAKT) the chain is Cytoplasmic. The chain crosses the membrane as a helical span at residues 273-293 (VLVLVALFALCWLPNHLLYLY). Residues 294–313 (HSFTYESYANHSDVPFVIII) are Extracellular-facing. A helical transmembrane segment spans residues 314-333 (FSRVLAFSNSCVNPFALYWL). The Cytoplasmic segment spans residues 334–399 (SKTFQQHFKA…SSAKKGEDKV (66 aa)). Cys-347 carries S-palmitoyl cysteine lipidation.

It belongs to the G-protein coupled receptor 1 family. In terms of assembly, interacts with C6orf89.

The protein localises to the cell membrane. Functionally, role in sperm cell division, maturation, or function. This receptor mediates its action by association with G proteins that activate a phosphatidylinositol-calcium second messenger system. This chain is Bombesin receptor subtype-3 (Brs3), found in Mus musculus (Mouse).